Here is a 414-residue protein sequence, read N- to C-terminus: Serine hydroxymethyltransferase (414 aa).

(6S)-5,6,7,8-tetrahydrofolate contacts are provided by residues leucine 121 and 125–127; that span reads GHL. At lysine 229 the chain carries N6-(pyridoxal phosphate)lysine.

This sequence belongs to the SHMT family. As to quaternary structure, homodimer. Pyridoxal 5'-phosphate serves as cofactor.

The protein localises to the cytoplasm. It catalyses the reaction (6R)-5,10-methylene-5,6,7,8-tetrahydrofolate + glycine + H2O = (6S)-5,6,7,8-tetrahydrofolate + L-serine. It functions in the pathway one-carbon metabolism; tetrahydrofolate interconversion. It participates in amino-acid biosynthesis; glycine biosynthesis; glycine from L-serine: step 1/1. Functionally, catalyzes the reversible interconversion of serine and glycine with tetrahydrofolate (THF) serving as the one-carbon carrier. This reaction serves as the major source of one-carbon groups required for the biosynthesis of purines, thymidylate, methionine, and other important biomolecules. Also exhibits THF-independent aldolase activity toward beta-hydroxyamino acids, producing glycine and aldehydes, via a retro-aldol mechanism. This is Serine hydroxymethyltransferase from Albidiferax ferrireducens (strain ATCC BAA-621 / DSM 15236 / T118) (Rhodoferax ferrireducens).